A 159-amino-acid chain; its full sequence is MKIKVVTVGKLKEKYLKDGIAEYSKRISRFAKFEMIELSDEKTPDKASESENQKILEIEGQRILSKIADRDFVIVLAIEGKTFFSEEFSKQLEETSIKGFSTLTFIIGGSLGLSSSVKNRANLSVSFGRLTLPHQLMRLVLVEQIYRAFTIQQGFPYHK.

S-adenosyl-L-methionine is bound by residues Leu-76, Gly-108, and 127-132 (FGRLTL).

Belongs to the RNA methyltransferase RlmH family. Homodimer.

The protein resides in the cytoplasm. It catalyses the reaction pseudouridine(1915) in 23S rRNA + S-adenosyl-L-methionine = N(3)-methylpseudouridine(1915) in 23S rRNA + S-adenosyl-L-homocysteine + H(+). In terms of biological role, specifically methylates the pseudouridine at position 1915 (m3Psi1915) in 23S rRNA. The chain is Ribosomal RNA large subunit methyltransferase H from Streptococcus pneumoniae (strain 70585).